We begin with the raw amino-acid sequence, 27 residues long: uncharacterized protein (27 aa).

Its subcellular location is the plastid. It is found in the chloroplast. This is an uncharacterized protein from Anthoceros angustus (Hornwort).